A 414-amino-acid polypeptide reads, in one-letter code: MVSTFSRQDQNYKNDDLNQPSKEGRFGKYGGQYVPETLMPALFELETAASNAWKDKLFVKELNHLLKTYVGRETPLYEAKRLTEHYKTKHATTRIWLKREDLNHTGAHKINNALGQALLAIRMGKKRIIAETGAGQHGVATATVCARFGMKCIIYMGAEDIKRQSLNVFRMKLLGAEVKVVNSGTATLKDATSEAIRDWVSNVETTHYILGSVAGPHPFPKIVRDFHAVIGEETKKQCQESFGSLPDILLACVGGGSNAMGLFHPFIKETSVRLIGVEAAGSGVDTDKHAATITKGSVGILHGSMSLLLQDDNGQVQEAHSISAGLDYPGVGPEHSHLKDIGRAEYGSVTDQEALDALRLVSELEGIIPALETSHAFAWLDKLCPTLEKDTHIVINCSGRGDKDVNTVASSLDI.

A disordered region spans residues 1 to 26 (MVSTFSRQDQNYKNDDLNQPSKEGRF). The span at 10–26 (QNYKNDDLNQPSKEGRF) shows a compositional bias: basic and acidic residues. Lys109 carries the N6-(pyridoxal phosphate)lysine modification.

The protein belongs to the TrpB family. Tetramer of two alpha and two beta chains. Requires pyridoxal 5'-phosphate as cofactor.

It carries out the reaction (1S,2R)-1-C-(indol-3-yl)glycerol 3-phosphate + L-serine = D-glyceraldehyde 3-phosphate + L-tryptophan + H2O. Its pathway is amino-acid biosynthesis; L-tryptophan biosynthesis; L-tryptophan from chorismate: step 5/5. Functionally, the beta subunit is responsible for the synthesis of L-tryptophan from indole and L-serine. The protein is Tryptophan synthase beta chain of Prochlorococcus marinus (strain MIT 9312).